The chain runs to 55 residues: uncharacterized protein (55 aa).

Transmembrane regions (helical) follow at residues 2–19 (VIGL…SFIA) and 24–46 (LLSI…FRYF).

It localises to the cell membrane. This is an uncharacterized protein from Alkalihalophilus pseudofirmus (strain ATCC BAA-2126 / JCM 17055 / OF4) (Bacillus pseudofirmus).